A 385-amino-acid chain; its full sequence is Chaperone protein DnaJ (385 aa).

Positions 5 to 70 constitute a J domain; sequence DYYEILEITR…SKRQIYDKYG (66 aa). The segment at 136–213 adopts a CR-type zinc-finger fold; sequence GCKKEIHNSF…CKGSGFEISE (78 aa). Positions 149, 152, 165, 168, 187, 190, 201, and 204 each coordinate Zn(2+). CXXCXGXG motif repeat units lie at residues 149–156, 165–172, 187–194, and 201–208; these read CSDCKGTG, CKDCGGKG, CPTCKGEG, and CSKCKGSG.

It belongs to the DnaJ family. As to quaternary structure, homodimer. Zn(2+) serves as cofactor.

It localises to the cytoplasm. In terms of biological role, participates actively in the response to hyperosmotic and heat shock by preventing the aggregation of stress-denatured proteins and by disaggregating proteins, also in an autonomous, DnaK-independent fashion. Unfolded proteins bind initially to DnaJ; upon interaction with the DnaJ-bound protein, DnaK hydrolyzes its bound ATP, resulting in the formation of a stable complex. GrpE releases ADP from DnaK; ATP binding to DnaK triggers the release of the substrate protein, thus completing the reaction cycle. Several rounds of ATP-dependent interactions between DnaJ, DnaK and GrpE are required for fully efficient folding. Also involved, together with DnaK and GrpE, in the DNA replication of plasmids through activation of initiation proteins. The chain is Chaperone protein DnaJ from Helicobacter hepaticus (strain ATCC 51449 / 3B1).